We begin with the raw amino-acid sequence, 261 residues long: Carnitinyl-CoA dehydratase (261 aa).

The Nucleophile role is filled by Glu-111. Glu-131 serves as the catalytic Proton acceptor.

It belongs to the enoyl-CoA hydratase/isomerase family.

It carries out the reaction (R)-carnitinyl-CoA = crotonobetainyl-CoA + H2O. It participates in amine and polyamine metabolism; carnitine metabolism. Its function is as follows. Catalyzes the reversible dehydration of L-carnitinyl-CoA to crotonobetainyl-CoA. This chain is Carnitinyl-CoA dehydratase, found in Salmonella dublin (strain CT_02021853).